The primary structure comprises 381 residues: E3 ubiquitin-protein ligase KCMF1 (381 aa).

N-acetylserine is present on serine 2. A Phosphoserine modification is found at serine 2. The ZZ-type zinc finger occupies 4–60; that stretch reads HEGVSCDACLKGNFRGRRYKCLICYDYDLCASCYESGATTTRHTTDHPMQCILTRVD. 8 residues coordinate Zn(2+): cysteine 9, cysteine 12, cysteine 24, cysteine 27, cysteine 33, cysteine 36, histidine 46, and histidine 50. The C2H2-type zinc-finger motif lies at 78–101; the sequence is FTCPYCGKMGYTETSLQEHVTSEH. The segment at 154–194 is disordered; sequence MFHPGRGLGGPRARRSNMHFTSSSTGGLSSSQSSYSPSSRE. Residues serine 169, serine 189, and serine 212 each carry the phosphoserine modification. The segment covering 175-192 has biased composition (low complexity); the sequence is SSSTGGLSSSQSSYSPSS. Positions 224–259 form a coiled coil; that stretch reads ASQLQQLQMQLQLERQHAQAARQQLETARNASRRTN. A phosphoserine mark is found at serine 335 and serine 336.

It belongs to the KCMF1 family. As to quaternary structure, component of the SIFI complex, composed of KCMF1, UBR4 and calmodulin (CALM1, CALM2 or CALM3). Testis, liver, kidney, heart and skeletal muscle.

The protein resides in the cytoplasm. It localises to the late endosome. The protein localises to the lysosome. The catalysed reaction is S-ubiquitinyl-[E2 ubiquitin-conjugating enzyme]-L-cysteine + [acceptor protein]-L-lysine = [E2 ubiquitin-conjugating enzyme]-L-cysteine + N(6)-ubiquitinyl-[acceptor protein]-L-lysine.. The protein operates within protein modification; protein ubiquitination. Functionally, E3 ubiquitin-protein ligase which accepts ubiquitin from an E2 ubiquitin-conjugating enzyme and then transfers it to targeted substrates, promoting their degradation by the proteasome. Together with UBR4, component of the N-end rule pathway: ubiquitinates proteins bearing specific N-terminal residues that are destabilizing according to the N-end rule, leading to their degradation. Does not ubiquitinate proteins that are acetylated at the N-terminus. Together with UBR4, part of a protein quality control pathway that catalyzes ubiquitination and degradation of proteins that have been oxidized in response to reactive oxygen species (ROS): recognizes proteins with an Arg-CysO3(H) degron at the N-terminus, and mediates assembly of heterotypic 'Lys-63'-/'Lys-27'-linked branched ubiquitin chains on oxidized proteins, leading to their degradation by autophagy. Catalytic component of the SIFI complex, a multiprotein complex required to inhibit the mitochondrial stress response after a specific stress event has been resolved: ubiquitinates and degrades (1) components of the HRI-mediated signaling of the integrated stress response, such as DELE1 and EIF2AK1/HRI, as well as (2) unimported mitochondrial precursors. Within the SIFI complex, UBR4 initiates ubiquitin chain that are further elongated or branched by KCMF1. The polypeptide is E3 ubiquitin-protein ligase KCMF1 (Mus musculus (Mouse)).